The sequence spans 426 residues: Serine--tRNA ligase (426 aa).

Residue 233-235 (TAE) coordinates L-serine. An ATP-binding site is contributed by 264–266 (RSE). Glu287 is a binding site for L-serine. 351 to 354 (EISS) lines the ATP pocket. Ser387 lines the L-serine pocket.

It belongs to the class-II aminoacyl-tRNA synthetase family. Type-1 seryl-tRNA synthetase subfamily. In terms of assembly, homodimer. The tRNA molecule binds across the dimer.

The protein localises to the cytoplasm. The catalysed reaction is tRNA(Ser) + L-serine + ATP = L-seryl-tRNA(Ser) + AMP + diphosphate + H(+). It carries out the reaction tRNA(Sec) + L-serine + ATP = L-seryl-tRNA(Sec) + AMP + diphosphate + H(+). The protein operates within aminoacyl-tRNA biosynthesis; selenocysteinyl-tRNA(Sec) biosynthesis; L-seryl-tRNA(Sec) from L-serine and tRNA(Sec): step 1/1. Its function is as follows. Catalyzes the attachment of serine to tRNA(Ser). Is also able to aminoacylate tRNA(Sec) with serine, to form the misacylated tRNA L-seryl-tRNA(Sec), which will be further converted into selenocysteinyl-tRNA(Sec). The chain is Serine--tRNA ligase from Pseudomonas putida (strain ATCC 700007 / DSM 6899 / JCM 31910 / BCRC 17059 / LMG 24140 / F1).